Here is a 582-residue protein sequence, read N- to C-terminus: Semenogelin-2 (582 aa).

The N-terminal stretch at 1-23 is a signal peptide; sequence MKSIILFVLSLLLILEKQAAVMG. Disordered stretches follow at residues 26-65, 132-159, 272-295, 318-358, 379-417, and 439-582; these read CGSK…SFSI, GGQA…SSQY, NLNQ…RTEE, TEEK…ERHL, EEQI…EERR, and EEQI…PVST. 2 stretches are compositionally biased toward polar residues: residues 31–40 and 137–159; these read QLPSGSSQFP and RGTQ…SSQY. Positions 325-335 are enriched in polar residues; sequence KSQNQVTIHSQ. Residues 336 to 345 are compositionally biased toward basic and acidic residues; it reads GQEHGHKENK. 4 stretches are compositionally biased toward polar residues: residues 379–397, 439–457, 487–496, and 506–524; these read EEQI…SQAQ, KDVSQSSTSF, and SQIQ…QNAK. Composition is skewed to basic and acidic residues over residues 525–552 and 559–582; these read GKSD…ESSE and TEHE…PVST.

Belongs to the semenogelin family. Interacts with SERPINA5.

The protein resides in the secreted. Its function is as follows. Participates in the formation of a gel matrix (sperm coagulum) entrapping the accessory gland secretions and ejaculated spermatozoa. The protein is Semenogelin-2 (SEMG2) of Hylobates lar (Lar gibbon).